Here is a 1143-residue protein sequence, read N- to C-terminus: FH2 domain-containing protein 1 (1143 aa).

Positions 16 to 89 are disordered; the sequence is GNIATAPGFM…PPTTHMNGYS (74 aa). Composition is skewed to pro residues over residues 29–46 and 56–80; these read TPPP…PSPP and SSPP…PGLP. An FH2 domain is found at 87 to 482; it reads GYSHLGKKKR…QLQRLKEQEQ (396 aa). Position 500 is a phosphoserine (Ser-500). A disordered region spans residues 517–638; that stretch reads PFLHPRPISP…NHASAFPRAR (122 aa). Residues 521–534 show a composition bias toward low complexity; that stretch reads PRPISPSSPSYRPP. Phosphoserine is present on residues Ser-650, Ser-660, and Ser-664. The segment at 706–1143 is disordered; that stretch reads LESVGHRGPQ…LGRILNPLRK (438 aa). The span at 806 to 818 shows a compositional bias: low complexity; it reads GSMSSGVGEMGDS. The span at 848–861 shows a compositional bias: basic and acidic residues; that stretch reads LPRDKPTKRKDVVA. The segment covering 925–947 has biased composition (polar residues); sequence RGPSQNPPSSTDTVWSRQNSVRR. Over residues 958 to 968 the composition is skewed to low complexity; it reads PRGSSGSSSTR. Residues 960 to 1086 form an MTBD; microtubule-binding domain region; that stretch reads GSSGSSSTRP…DAAPKDSSTL (127 aa). Positions 995–1018 are enriched in basic and acidic residues; that stretch reads QKPEENKTCRAHSEGPESPKEEPK. Over residues 1036–1046 the composition is skewed to polar residues; that stretch reads ARNTVASSSRS. 2 stretches are compositionally biased toward basic and acidic residues: residues 1071 to 1080 and 1117 to 1130; these read VKGDPEDAAP and GAGE…KDSS.

In terms of assembly, interacts with CEP170.

The protein resides in the cell projection. Its subcellular location is the cilium. It localises to the golgi apparatus. Microtubule-associated formin which regulates both actin and microtubule dynamics. Induces microtubule acetylation and stabilization and actin stress fiber formation. Regulates Golgi ribbon formation. Required for normal cilia assembly. Early in cilia assembly, may assist in the maturation and positioning of the centrosome/basal body, and once cilia assembly has initiated, may also promote cilia elongation by inhibiting disassembly. This chain is FH2 domain-containing protein 1 (FHDC1), found in Homo sapiens (Human).